The sequence spans 388 residues: Chorismate synthase (388 aa).

2 residues coordinate NADP(+): Arg-39 and Arg-45. FMN is bound by residues 130–132, 251–252, Gly-296, 311–315, and Arg-337; these read RSS, NA, and KPIPT.

The protein belongs to the chorismate synthase family. In terms of assembly, homotetramer. FMNH2 is required as a cofactor.

The catalysed reaction is 5-O-(1-carboxyvinyl)-3-phosphoshikimate = chorismate + phosphate. The protein operates within metabolic intermediate biosynthesis; chorismate biosynthesis; chorismate from D-erythrose 4-phosphate and phosphoenolpyruvate: step 7/7. In terms of biological role, catalyzes the anti-1,4-elimination of the C-3 phosphate and the C-6 proR hydrogen from 5-enolpyruvylshikimate-3-phosphate (EPSP) to yield chorismate, which is the branch point compound that serves as the starting substrate for the three terminal pathways of aromatic amino acid biosynthesis. This reaction introduces a second double bond into the aromatic ring system. This is Chorismate synthase from Streptococcus sanguinis (strain SK36).